The sequence spans 322 residues: Germ cell-specific gene 1-like protein (322 aa).

Residues 1–8 (MELSRRNR) lie on the Cytoplasmic side of the membrane. The chain crosses the membrane as a helical span at residues 9-29 (SLLSVVLNLLALSFSVAAFFT). At 30–125 (SYWCEGTHKV…IELSPDSEKG (96 aa)) the chain is on the extracellular side. Residues 126–146 (VLWLSVISEFLYIILLSLGFL) form a helical membrane-spanning segment. The Cytoplasmic segment spans residues 147–166 (LMCLEFFSSSNFIDGLKINA). Residues 167-187 (FAAIITVLSGLLGMVAHMMYM) form a helical membrane-spanning segment. Residues 188–209 (TVFQVTVNLGPKDWRPQTWYYG) are Extracellular-facing. A helical transmembrane segment spans residues 210 to 230 (WSFGLAWLSFTLCMSASVLTL). The Cytoplasmic segment spans residues 231–322 (NTYTKTILEF…MDLEDDGDQC (92 aa)).

Belongs to the GSG1 family. As to quaternary structure, component of the AMPAR complex.

It localises to the cell membrane. The protein localises to the synapse. In terms of biological role, as a component of the AMPAR complex, modifies AMPA receptor (AMPAR) gating. The chain is Germ cell-specific gene 1-like protein (gsg1l) from Xenopus tropicalis (Western clawed frog).